A 77-amino-acid chain; its full sequence is Large ribosomal subunit protein bL28 (77 aa).

The protein belongs to the bacterial ribosomal protein bL28 family.

The chain is Large ribosomal subunit protein bL28 from Verminephrobacter eiseniae (strain EF01-2).